The chain runs to 218 residues: Thiamine-phosphate synthase (218 aa).

4-amino-2-methyl-5-(diphosphooxymethyl)pyrimidine-binding positions include 43–47 (QLRMK) and Asn-75. Mg(2+)-binding residues include Asp-76 and Asp-95. Thr-114 provides a ligand contact to 4-amino-2-methyl-5-(diphosphooxymethyl)pyrimidine. Residue 140–142 (TST) participates in 2-[(2R,5Z)-2-carboxy-4-methylthiazol-5(2H)-ylidene]ethyl phosphate binding. Residue Lys-143 coordinates 4-amino-2-methyl-5-(diphosphooxymethyl)pyrimidine. 2-[(2R,5Z)-2-carboxy-4-methylthiazol-5(2H)-ylidene]ethyl phosphate is bound by residues Gly-171 and 191–192 (VS).

Belongs to the thiamine-phosphate synthase family. The cofactor is Mg(2+).

It carries out the reaction 2-[(2R,5Z)-2-carboxy-4-methylthiazol-5(2H)-ylidene]ethyl phosphate + 4-amino-2-methyl-5-(diphosphooxymethyl)pyrimidine + 2 H(+) = thiamine phosphate + CO2 + diphosphate. The enzyme catalyses 2-(2-carboxy-4-methylthiazol-5-yl)ethyl phosphate + 4-amino-2-methyl-5-(diphosphooxymethyl)pyrimidine + 2 H(+) = thiamine phosphate + CO2 + diphosphate. It catalyses the reaction 4-methyl-5-(2-phosphooxyethyl)-thiazole + 4-amino-2-methyl-5-(diphosphooxymethyl)pyrimidine + H(+) = thiamine phosphate + diphosphate. The protein operates within cofactor biosynthesis; thiamine diphosphate biosynthesis; thiamine phosphate from 4-amino-2-methyl-5-diphosphomethylpyrimidine and 4-methyl-5-(2-phosphoethyl)-thiazole: step 1/1. Condenses 4-methyl-5-(beta-hydroxyethyl)thiazole monophosphate (THZ-P) and 2-methyl-4-amino-5-hydroxymethyl pyrimidine pyrophosphate (HMP-PP) to form thiamine monophosphate (TMP). The chain is Thiamine-phosphate synthase from Myxococcus xanthus (strain DK1622).